The chain runs to 482 residues: Glutamyl-tRNA(Gln) amidotransferase subunit A (482 aa).

Catalysis depends on charge relay system residues Lys-74 and Ser-149. Ser-173 acts as the Acyl-ester intermediate in catalysis.

This sequence belongs to the amidase family. GatA subfamily. In terms of assembly, heterotrimer of A, B and C subunits.

The catalysed reaction is L-glutamyl-tRNA(Gln) + L-glutamine + ATP + H2O = L-glutaminyl-tRNA(Gln) + L-glutamate + ADP + phosphate + H(+). In terms of biological role, allows the formation of correctly charged Gln-tRNA(Gln) through the transamidation of misacylated Glu-tRNA(Gln) in organisms which lack glutaminyl-tRNA synthetase. The reaction takes place in the presence of glutamine and ATP through an activated gamma-phospho-Glu-tRNA(Gln). In Prochlorococcus marinus (strain MIT 9215), this protein is Glutamyl-tRNA(Gln) amidotransferase subunit A.